The sequence spans 290 residues: Phosphatidylglycerol--prolipoprotein diacylglyceryl transferase (290 aa).

7 helical membrane passes run 21 to 41, 60 to 80, 96 to 116, 124 to 144, 198 to 218, 225 to 245, and 260 to 280; these read VALH…MWLA, LLYA…VLFY, WDGG…MVIF, FFQV…AGRL, SQLY…NLFI, GSVS…VEFF, and ISMG…MMIW. Arg143 lines the a 1,2-diacyl-sn-glycero-3-phospho-(1'-sn-glycerol) pocket.

The protein belongs to the Lgt family.

It is found in the cell inner membrane. It catalyses the reaction L-cysteinyl-[prolipoprotein] + a 1,2-diacyl-sn-glycero-3-phospho-(1'-sn-glycerol) = an S-1,2-diacyl-sn-glyceryl-L-cysteinyl-[prolipoprotein] + sn-glycerol 1-phosphate + H(+). The protein operates within protein modification; lipoprotein biosynthesis (diacylglyceryl transfer). Functionally, catalyzes the transfer of the diacylglyceryl group from phosphatidylglycerol to the sulfhydryl group of the N-terminal cysteine of a prolipoprotein, the first step in the formation of mature lipoproteins. This is Phosphatidylglycerol--prolipoprotein diacylglyceryl transferase from Enterobacter sp. (strain 638).